Reading from the N-terminus, the 82-residue chain is Small ribosomal subunit protein bS16 (82 aa).

Belongs to the bacterial ribosomal protein bS16 family.

The chain is Small ribosomal subunit protein bS16 from Yersinia pseudotuberculosis serotype O:1b (strain IP 31758).